We begin with the raw amino-acid sequence, 279 residues long: Pleckstrin homology domain-containing family F member 1 (279 aa).

The 97-residue stretch at Val35 to Arg131 folds into the PH domain. The FYVE-type zinc finger occupies Asp152–Ala212. Residues Cys158, Cys161, Cys175, Cys178, Cys183, Cys186, Cys204, and Cys207 each contribute to the Zn(2+) site. Positions Glu218–Ser264 are disordered. A compositionally biased stretch (acidic residues) spans Gly244–Lys253.

As to expression, highly expressed in heart and skeletal muscle. Weakly expressed in brain, thymus, spleen, kidney, liver, small intestine, placenta and lung.

It is found in the nucleus. Its subcellular location is the cytoplasm. It localises to the perinuclear region. The protein resides in the lysosome. Functionally, may induce apoptosis through the lysosomal-mitochondrial pathway. Translocates to the lysosome initiating the permeabilization of lysosomal membrane (LMP) and resulting in the release of CTSD and CTSL to the cytoplasm. Triggers the caspase-independent apoptosis by altering mitochondrial membrane permeabilization (MMP) resulting in the release of PDCD8. The protein is Pleckstrin homology domain-containing family F member 1 (PLEKHF1) of Homo sapiens (Human).